The following is a 28-amino-acid chain: Dermaseptin-1 (28 aa).

Gln28 is modified (glutamine amide).

Expressed by the skin glands.

The protein resides in the secreted. Its function is as follows. Has antimicrobial activity. This Phyllomedusa tomopterna (Tiger-striped leaf frog) protein is Dermaseptin-1.